The following is a 581-amino-acid chain: Chaperonin GroEL 1 (581 aa).

ATP is bound by residues 29–32, 86–90, glycine 413, and aspartate 492; these read TIGP and DGTTT. Residues 522-543 are disordered; sequence PEPEPAAPGGPSGDPMGGMGGM. Positions 531-543 are enriched in gly residues; sequence GPSGDPMGGMGGM.

It belongs to the chaperonin (HSP60) family. As to quaternary structure, forms a cylinder of 14 subunits composed of two heptameric rings stacked back-to-back. Interacts with the co-chaperonin GroES.

Its subcellular location is the cytoplasm. The enzyme catalyses ATP + H2O + a folded polypeptide = ADP + phosphate + an unfolded polypeptide.. Its function is as follows. Together with its co-chaperonin GroES, plays an essential role in assisting protein folding. The GroEL-GroES system forms a nano-cage that allows encapsulation of the non-native substrate proteins and provides a physical environment optimized to promote and accelerate protein folding. The protein is Chaperonin GroEL 1 of Prochlorococcus marinus (strain MIT 9215).